Here is a 271-residue protein sequence, read N- to C-terminus: Monalysin (271 aa).

The propeptide occupies 1–33; that stretch reads MTIKEELGQPQSHSIELDEVSKEAASTRAALTS. The interval 102–170 is pore-forming domain; sequence IPQNVTTTLS…FTDTTEMKGP (69 aa).

In terms of assembly, pro-Monalysin forms a stable donut-like 18-mer complex composed of two disk-shaped nonamers held together by N-terminal swapping of the pro-peptides. After proteolytic cleavage, the inactive 18-mer complex probably dissociates into two disk-shaped active nonamers in which the transmembrane segments are unmasked and ready to engage the conformational change leading to the pore formation into the target membrane. Multimerizes into circular-like structures and barrel-like aggregates. Requires N-terminal cleavage to become fully active. The metalloprotease AprA can induce the rapid cleavage of pro-Monalysin into its active form. Can also be processed by trypsin.

The protein resides in the secreted. It localises to the host cell membrane. Its function is as follows. Pore-forming toxin that contributes to the virulence of P.entomophila against Drosophila, playing an important role in host intestinal damage and lethality. Displays cytolytic and hemolytic activity. This is Monalysin from Pseudomonas entomophila (strain L48).